We begin with the raw amino-acid sequence, 92 residues long: Cytochrome c2 (92 aa).

Heme c is bound by residues Cys-12, Cys-15, His-16, and Met-66.

It belongs to the cytochrome c family. In terms of processing, binds 1 heme c group covalently per subunit.

Its function is as follows. Cytochrome c2 is found mainly in purple, non-sulfur, photosynthetic bacteria where it functions as the electron donor to the oxidized bacteriochlorophyll in the photophosphorylation pathway. However, it may also have a role in the respiratory chain and is found in some non-photosynthetic bacteria. The sequence is that of Cytochrome c2 from Rhodocyclus tenuis (Rhodospirillum tenue).